Reading from the N-terminus, the 391-residue chain is MQTVYGIKAHGGKLVNLEDFSEATRQAAEQLPSLTINNWNISDLELIGIGGFSPLTGFMVSDDYHSVVNTMHLKSGVIWSVPITLGVSQADADKIELNTKIALKGADGVIYGTMQVEDKFVPDKQLEAQNVYKTTDEAHPGVKRLYANGDVYLGGAIKLLHKPDHGAFSDYYMEPLETRKMFHDLGWKRIVGFQTRNPIHRAHEYIQKLALENVDGLFLNPLVGETKADDIPADVRMESYKTILKYYYPEDRVRLVIYPAAMRYAGPKEAILHAIVRKNYGCTDFIVGRDHAGVGDYYGTYEAQELITSVEDEMGMHFFKFDNSFYCKKCGSMATQKTCPHGAEDHISLSGTKVRKMLADGVVPPKEVSRPEVARVLIDGLKRKREQQQEV.

Belongs to the sulfate adenylyltransferase family.

The enzyme catalyses sulfate + ATP + H(+) = adenosine 5'-phosphosulfate + diphosphate. The protein operates within sulfur metabolism; hydrogen sulfide biosynthesis; sulfite from sulfate: step 1/3. This chain is Sulfate adenylyltransferase, found in Lactiplantibacillus plantarum (strain ATCC BAA-793 / NCIMB 8826 / WCFS1) (Lactobacillus plantarum).